The primary structure comprises 150 residues: Large ribosomal subunit protein bL9 (150 aa).

The protein belongs to the bacterial ribosomal protein bL9 family.

Binds to the 23S rRNA. The protein is Large ribosomal subunit protein bL9 of Janthinobacterium sp. (strain Marseille) (Minibacterium massiliensis).